A 262-amino-acid polypeptide reads, in one-letter code: Phycoerythrobilin:ferredoxin oxidoreductase (262 aa).

It belongs to the HY2 family.

It catalyses the reaction (3Z)-phycoerythrobilin + oxidized 2[4Fe-4S]-[ferredoxin] = 15,16-dihydrobiliverdin + reduced 2[4Fe-4S]-[ferredoxin] + 2 H(+). Its function is as follows. Catalyzes the two-electron reduction of the C2 and C3(1) diene system of 15,16-dihydrobiliverdin. The chain is Phycoerythrobilin:ferredoxin oxidoreductase from Synechococcus sp. (strain RCC307).